Reading from the N-terminus, the 136-residue chain is Large ribosomal subunit protein bL17 (136 aa).

It belongs to the bacterial ribosomal protein bL17 family. Part of the 50S ribosomal subunit. Contacts protein L32.

The chain is Large ribosomal subunit protein bL17 from Rickettsia conorii (strain ATCC VR-613 / Malish 7).